The primary structure comprises 536 residues: Feruloyl esterase B (536 aa).

An N-terminal signal peptide occupies residues 1–20; that stretch reads MKTSIVLSIVALFLTSKASA. The 39-residue stretch at 21–59 folds into the CBM10 domain; sequence DCWSERLGWPCCSDSNAEVIYVDDDGDWGVENNDWCGIQ. The cellulose-binding stretch occupies residues 22–59; that stretch reads CWSERLGWPCCSDSNAEVIYVDDDGDWGVENNDWCGIQ. Asn-65 is a glycosylation site (N-linked (GlcNAc...) asparagine). 12 repeat units span residues 78-90, 91-103, 104-116, 117-129, 134-146, 151-163, 164-176, 181-193, 194-206, 211-223, 224-236, and 237-249. The segment at 78–249 is 12 X 13 AA repeats of N-Q-G-G-G-M-[PQ]-W-G-D-F-G-G; sequence NQGGGMPWGD…GGMQWGDFGG (172 aa). The span at 203 to 252 shows a compositional bias: gly residues; it reads DFGGNQGGNQGGGMPWGDFGGNQGGGMQWGDFGGNQGGGMQWGDFGGNQG. The segment at 203–273 is disordered; the sequence is DFGGNQGGNQ…SGPTVEYSTD (71 aa). Positions 257-536 are catalytic; the sequence is WGNQGGNSGP…WDFVKQFSLP (280 aa).

As to quaternary structure, component of the multienzyme cellulase-hemicellulase complex.

It localises to the secreted. The catalysed reaction is feruloyl-polysaccharide + H2O = ferulate + polysaccharide.. With respect to regulation, inhibited by the specific serine esterase inhibitor AEBSF. Functionally, involved in degradation of plant cell walls. Hydrolyzes of the feruloyl-arabinose ester bond in arabinoxylans as well as the feruloyl-galactose and feruloyl-arabinose ester bonds in pectin. The polypeptide is Feruloyl esterase B (ESTA) (Piromyces equi).